A 318-amino-acid polypeptide reads, in one-letter code: Ribose-phosphate pyrophosphokinase 2 (318 aa).

96-101 (RQDKKD) contributes to the ATP binding site. 4 residues coordinate Mg(2+): Asp-128, His-130, Asp-139, and Asp-143. His-130 is a binding site for ATP. The tract at residues 212–227 (KDRVAILVDDMADTCG) is binding of phosphoribosylpyrophosphate.

It belongs to the ribose-phosphate pyrophosphokinase family. Homodimer. The active form is probably a hexamer composed of 3 homodimers. Requires Mg(2+) as cofactor.

It catalyses the reaction D-ribose 5-phosphate + ATP = 5-phospho-alpha-D-ribose 1-diphosphate + AMP + H(+). Its pathway is metabolic intermediate biosynthesis; 5-phospho-alpha-D-ribose 1-diphosphate biosynthesis; 5-phospho-alpha-D-ribose 1-diphosphate from D-ribose 5-phosphate (route I): step 1/1. With respect to regulation, activated by magnesium and inorganic phosphate. Its function is as follows. Catalyzes the synthesis of phosphoribosylpyrophosphate (PRPP) that is essential for nucleotide synthesis. This Rattus norvegicus (Rat) protein is Ribose-phosphate pyrophosphokinase 2 (Prps2).